A 239-amino-acid chain; its full sequence is DNA repair protein RecO (239 aa).

It belongs to the RecO family.

In terms of biological role, involved in DNA repair and RecF pathway recombination. The polypeptide is DNA repair protein RecO (Bifidobacterium longum (strain DJO10A)).